The chain runs to 199 residues: Thymidylate kinase (199 aa).

7-14 (GIDGSGKS) serves as a coordination point for ATP.

The protein belongs to the thymidylate kinase family.

It carries out the reaction dTMP + ATP = dTDP + ADP. Its function is as follows. Phosphorylation of dTMP to form dTDP in both de novo and salvage pathways of dTTP synthesis. The chain is Thymidylate kinase from Thermosipho melanesiensis (strain DSM 12029 / CIP 104789 / BI429).